Here is a 270-residue protein sequence, read N- to C-terminus: Meiotic recombination 1 protein (270 aa).

In terms of domain architecture, KH spans 191-225 (EIKLNKTQITFLIGAKGTRIESLREKSGASIKIIP).

In terms of biological role, required for chromosome pairing and genetic recombination. MER1 may function to bring the axial elements of the synaptonemal complex corresponding to homologous chromosomes together by initiating recombination. MER1 might be responsible for regulating the MER2 gene and/or gene product. The sequence is that of Meiotic recombination 1 protein (MER1) from Saccharomyces cerevisiae (strain ATCC 204508 / S288c) (Baker's yeast).